The following is a 136-amino-acid chain: Large ribosomal subunit protein eL27 (136 aa).

In terms of domain architecture, KOW spans 5 to 36 (MKPGKVVLVLRGKYAGRKAVVVKQQDEGVSDR).

It belongs to the eukaryotic ribosomal protein eL27 family. Component of the large ribosomal subunit.

The protein resides in the cytoplasm. The protein localises to the cytosol. It localises to the rough endoplasmic reticulum. Component of the large ribosomal subunit. This is Large ribosomal subunit protein eL27 (rpl-27) from Caenorhabditis elegans.